An 819-amino-acid chain; its full sequence is DNA mismatch repair protein MutS (819 aa).

An ATP-binding site is contributed by 596–603 (GPNMSGKS).

The protein belongs to the DNA mismatch repair MutS family.

This protein is involved in the repair of mismatches in DNA. It is possible that it carries out the mismatch recognition step. This protein has a weak ATPase activity. This is DNA mismatch repair protein MutS from Thermosipho melanesiensis (strain DSM 12029 / CIP 104789 / BI429).